We begin with the raw amino-acid sequence, 380 residues long: Succinate--CoA ligase [ADP-forming] subunit beta 2 (380 aa).

Residues 9 to 235 form the ATP-grasp domain; sequence KQIFSKHGIR…YTEADQMERI (227 aa). ATP contacts are provided by residues Lys-45, 52–54, Glu-91, Ile-94, and Glu-99; that span reads GRG. The Mg(2+) site is built by Asn-191 and Asp-204. Residues Asn-255 and 312-314 contribute to the substrate site; that span reads GIT.

Belongs to the succinate/malate CoA ligase beta subunit family. Heterotetramer of two alpha and two beta subunits. Requires Mg(2+) as cofactor.

It catalyses the reaction succinate + ATP + CoA = succinyl-CoA + ADP + phosphate. It carries out the reaction GTP + succinate + CoA = succinyl-CoA + GDP + phosphate. It functions in the pathway carbohydrate metabolism; tricarboxylic acid cycle; succinate from succinyl-CoA (ligase route): step 1/1. Functionally, succinyl-CoA synthetase functions in the citric acid cycle (TCA), coupling the hydrolysis of succinyl-CoA to the synthesis of either ATP or GTP and thus represents the only step of substrate-level phosphorylation in the TCA. The beta subunit provides nucleotide specificity of the enzyme and binds the substrate succinate, while the binding sites for coenzyme A and phosphate are found in the alpha subunit. This is Succinate--CoA ligase [ADP-forming] subunit beta 2 from Archaeoglobus fulgidus (strain ATCC 49558 / DSM 4304 / JCM 9628 / NBRC 100126 / VC-16).